The primary structure comprises 4303 residues: Polycystin-1 (4303 aa).

Positions 1-23 (MPPAAPARLALALGLGLWLGALA) are cleaved as a signal peptide. The LRRNT domain maps to 24–67 (GGPGRGCGPCEPPCLCGPAPGAACRVNCSGRGLRTLGPALRIPA). Topologically, residues 24 to 3074 (GGPGRGCGPC…VFPEPTADVN (3051 aa)) are extracellular. N50 and N89 each carry an N-linked (GlcNAc...) asparagine glycan. LRR repeat units lie at residues 68-91 (DATALDVSHNLLRALDVGLLANLS) and 92-113 (ALAELDISNNKISTLEEGIFAN). N-linked (GlcNAc...) asparagine glycans are attached at residues N116 and N121. The LRRCT domain occupies 125-178 (NPFECDCGLAWLPRWAEEQQVRVVQPEAATCAGPGSLAGQPLLGIPLLDSGCGE). A WSC domain is found at 177 to 271 (GEEYVACLPD…PTLLQHVFPA (95 aa)). N187 carries an N-linked (GlcNAc...) asparagine glycan. One can recognise a PKD 1 domain in the interval 272-359 (SPGATLVGPH…VQVEAAPAAL (88 aa)). The region spanning 415–531 (GNGHCYRLVV…CSAPHSYVCE (117 aa)) is the C-type lectin domain. Cystine bridges form between C436–C530 and C508–C522. Residues 616 to 635 (AGTPENGSEPESRSPDNRTQ) are disordered. N-linked (GlcNAc...) asparagine glycosylation is found at N621 and N632. The 34-residue stretch at 638–671 (PACMPGGRWCPGANICLPLDASCHPQACANGCTS) folds into the LDL-receptor class A; atypical domain. 3 disulfide bridges follow: C640-C653, C647-C665, and C660-C669. Residues 743-817 (LSANASSWLP…RHNLSCSFDV (75 aa)) enclose the PKD 2 domain. N746, N810, N841, N854, N890, N921, N1004, N1010, N1034, N1072, N1113, N1178, N1194, N1240, N1269, N1336, N1348, N1382, N1450, N1455, N1474, N1518, N1541, N1554, N1563, N1647, N1661, N1733, N1791, N1834, N1867, and N1880 each carry an N-linked (GlcNAc...) asparagine glycan. PKD domains are found at residues 855-928 (ATAT…RVTA), 935-1020 (LRAT…NRMQ), 1023-1129 (QVST…LPSV), 1127-1215 (PSVA…LRGL), 1213-1298 (RGLS…EVLR), 1294-1383 (LEVL…VGNV), 1382-1469 (NVTL…VLVT), 1468-1551 (VTSI…VRGL), 1550-1635 (GLVV…IEGL), 1634-1721 (GLQV…VGWL), 1719-1805 (GWLM…VSGL), 1807-1890 (IRAS…IVGL), 1889-1974 (GLVL…VSGL), 1977-2057 (PNCC…VLEV), and 2060-2148 (AVQY…ACRE). N1991, N2050, N2074, N2125, N2248, N2353, N2395, N2412, N2567, N2578, N2645, N2718, N2754, N2841, N2878, N2925, N2956, and N2994 each carry an N-linked (GlcNAc...) asparagine glycan. In terms of domain architecture, REJ spans 2146-2833 (CREPEVDVVL…QLIFLVDSNP (688 aa)). A GAIN-B domain is found at 2862–3063 (PIERLASERA…SLFVPPSHVR (202 aa)). The cysteines at positions 3015 and 3043 are disulfide-linked. The interval 3015–3063 (CQYFSEEDMVWRTEGLLPLEETSPRQAVCLTRHLTAFGASLFVPPSHVR) is GPS. Residues 3075–3095 (YIVMLTCAVCLVTYMVMAAIL) form a helical membrane-spanning segment. Topologically, residues 3096–3277 (HKLDQLDASR…DRPPRSRFTR (182 aa)) are cytoplasmic. The 116-residue stretch at 3118 to 3233 (FKYEILVKTG…EANGGLVEKE (116 aa)) folds into the PLAT domain. The helical transmembrane segment at 3278–3298 (IQRATCCVLLICLFLGANAVW) threads the bilayer. Residues 3299 to 3323 (YGAVGDSAYSTGHVSRLSPLSVDTV) are Extracellular-facing. Residues 3324–3344 (AVGLVSSVVVYPVYLAILFLF) form a helical membrane-spanning segment. The Cytoplasmic portion of the chain corresponds to 3345-3559 (RMSRSKVAGS…LPAWCASLAH (215 aa)). The chain crosses the membrane as a helical span at residues 3560 to 3580 (GLSLLLVAVAVAVSGWVGASF). Residues 3581 to 3582 (PP) are Extracellular-facing. A helical membrane pass occupies residues 3583–3603 (GVSVAWLLSSSASFLASFLGW). Over 3604 to 3665 (EPLKVLLEAL…LAKEEARKVK (62 aa)) the chain is Cytoplasmic. The helical transmembrane segment at 3666-3686 (RLHGMLRSLLVYMLFLLVTLL) threads the bilayer. The Extracellular portion of the chain corresponds to 3687-3901 (ASYGDASCHG…RLSAGLSLPL (215 aa)). N3738, N3790, and N3845 each carry an N-linked (GlcNAc...) asparagine glycan. The helical transmembrane segment at 3902-3922 (LTSVCLLLFAVHFAVAEARTW) threads the bilayer. Over 3923–3935 (HREGRWRVLRLGA) the chain is Cytoplasmic. A helical transmembrane segment spans residues 3936 to 3956 (WARWLLVALTAATALVRLAQL). The Extracellular segment spans residues 3957-3984 (GAADRQWTRFVRGRPRRFTSFDQVAQLS). A helical membrane pass occupies residues 3985-4005 (SAARGLAASLLFLLLVKAAQQ). Topologically, residues 4006–4027 (LRFVRQWSVFGKTLCRALPELL) are cytoplasmic. The chain crosses the membrane as a helical span at residues 4028-4048 (GVTLGLVVLGVAYAQLAILLV). Residues 4049–4090 (SSCVDSLWSVAQALLVLCPGTGLSTLCPAESWHLSPLLCVGL) are Extracellular-facing. The helical transmembrane segment at 4091–4110 (WALRLWGALRLGAVILRWRY) threads the bilayer. Over 4111-4303 (HALRGELYRP…AKNKVHPSST (193 aa)) the chain is Cytoplasmic. Disordered regions lie at residues 4160–4196 (PLPSRSSRGSKVSPDVPPPSAGSDASHPSTSSSQLDG) and 4243–4303 (LHSL…PSST). S4166 bears the Phosphoserine; by PRKX; in vitro mark. The span at 4185–4195 (SHPSTSSSQLD) shows a compositional bias: polar residues. The stretch at 4220–4251 (EALLTQFDRLNQATEDVYQLEQQLHSLQGRRS) forms a coiled coil. Low complexity predominate over residues 4253–4269 (RAPAGSSRGPSPGLRPA). The span at 4292 to 4303 (LRAKNKVHPSST) shows a compositional bias: basic residues.

It belongs to the polycystin family. Component of the heterotetrameric polycystin channel complex with PKD2; the tetramer contains one PKD1 chain and three PKD2 chains. Interacts with PKD2; the interaction is required for ciliary localization. Interacts with PKD2L1. Interacts with PRKX; involved in differentiation and controlled morphogenesis of the kidney. Interacts (via extracellular domain) with WNT3A, WNT4, WNT5A and WNT9B. Interacts with DVL1 and DVL2. Interacts with NPHP1 (via SH3 domain). Interacts with BBS1, BBS4, BBS5 and TTC8. Interacts with RGS7. Interacts (via the PKD repeats in the N-terminal extracellular region) with EPCIP; the interaction is not dependent on N-glycosylation of either protein. In terms of processing, N-glycosylated. After synthesis, undergoes cleavage between Leu-3048 and Thr-3049 in the GPS region of the GAIN-B domain. Cleavage at the GPS region occurs through a cis-autoproteolytic mechanism involving an ester-intermediate via N-O acyl rearrangement. This process takes place in the early secretory pathway, depends on initial N-glycosylation, and requires the REJ domain. There is evidence that cleavage at GPS region is incomplete. Uncleaved and cleaved products may have different functions in vivo.

The protein resides in the cell membrane. It localises to the cell projection. Its subcellular location is the cilium. It is found in the endoplasmic reticulum. The protein localises to the golgi apparatus. The protein resides in the vesicle. It localises to the secreted. Its subcellular location is the extracellular exosome. Functionally, component of a heteromeric calcium-permeable ion channel formed by PKD1 and PKD2 that is activated by interaction between PKD1 and a Wnt family member, such as WNT3A and WNT9B. Both PKD1 and PKD2 are required for channel activity. Involved in renal tubulogenesis. Involved in fluid-flow mechanosensation by the primary cilium in renal epithelium. Acts as a regulator of cilium length, together with PKD2. The dynamic control of cilium length is essential in the regulation of mechanotransductive signaling. The cilium length response creates a negative feedback loop whereby fluid shear-mediated deflection of the primary cilium, which decreases intracellular cAMP, leads to cilium shortening and thus decreases flow-induced signaling. May be an ion-channel regulator. Involved in adhesive protein-protein and protein-carbohydrate interactions. Likely to be involved with polycystin-1-interacting protein 1 in the detection, sequestration and exocytosis of senescent mitochondria. This is Polycystin-1 from Homo sapiens (Human).